The chain runs to 147 residues: MISKWAKRFFQMAELVGSWSKDPSTQVGAVITKHNRIVSVGFNGYPHGVSDSADTDEREIKYLKTLHAEENAILFAKRDLEGCDIWVTHFPCPNCAAKIIQTGISKVYCPEQTEDFLSRWGEKIQVSQDMFSQAGVEVTWLPLDILK.

In terms of domain architecture, CMP/dCMP-type deaminase spans 4 to 120; it reads KWAKRFFQMA…EQTEDFLSRW (117 aa). His-67 serves as a coordination point for Zn(2+). Glu-69 acts as the Proton donor in catalysis. The Zn(2+) site is built by Cys-92 and Cys-95.

It belongs to the cytidine and deoxycytidylate deaminase family. Zn(2+) serves as cofactor.

This is an uncharacterized protein from Aliivibrio fischeri (Vibrio fischeri).